A 612-amino-acid polypeptide reads, in one-letter code: Elongation factor 4 (612 aa).

The tr-type G domain occupies 11-193; it reads KHIRNFSIIA…RIVTDVPAPS (183 aa). Residues 23-28 and 140-143 contribute to the GTP site; these read DHGKST and NKVD.

This sequence belongs to the TRAFAC class translation factor GTPase superfamily. Classic translation factor GTPase family. LepA subfamily.

Its subcellular location is the cell membrane. The catalysed reaction is GTP + H2O = GDP + phosphate + H(+). Functionally, required for accurate and efficient protein synthesis under certain stress conditions. May act as a fidelity factor of the translation reaction, by catalyzing a one-codon backward translocation of tRNAs on improperly translocated ribosomes. Back-translocation proceeds from a post-translocation (POST) complex to a pre-translocation (PRE) complex, thus giving elongation factor G a second chance to translocate the tRNAs correctly. Binds to ribosomes in a GTP-dependent manner. The protein is Elongation factor 4 of Lacticaseibacillus paracasei (strain ATCC 334 / BCRC 17002 / CCUG 31169 / CIP 107868 / KCTC 3260 / NRRL B-441) (Lactobacillus paracasei).